A 222-amino-acid polypeptide reads, in one-letter code: Triosephosphate isomerase (222 aa).

9-11 contacts substrate; the sequence is NYK. Histidine 93 functions as the Electrophile in the catalytic mechanism. Catalysis depends on glutamate 141, which acts as the Proton acceptor. Residues isoleucine 146, glycine 181, and 202–203 contribute to the substrate site; that span reads AS.

It belongs to the triosephosphate isomerase family. As to quaternary structure, homotetramer; dimer of dimers.

Its subcellular location is the cytoplasm. It catalyses the reaction D-glyceraldehyde 3-phosphate = dihydroxyacetone phosphate. It participates in carbohydrate biosynthesis; gluconeogenesis. It functions in the pathway carbohydrate degradation; glycolysis; D-glyceraldehyde 3-phosphate from glycerone phosphate: step 1/1. Its function is as follows. Involved in the gluconeogenesis. Catalyzes stereospecifically the conversion of dihydroxyacetone phosphate (DHAP) to D-glyceraldehyde-3-phosphate (G3P). This is Triosephosphate isomerase from Methanosarcina mazei (strain ATCC BAA-159 / DSM 3647 / Goe1 / Go1 / JCM 11833 / OCM 88) (Methanosarcina frisia).